Reading from the N-terminus, the 407-residue chain is UPF0761 membrane protein AZOSEA40600 (407 aa).

The next 6 membrane-spanning stretches (helical) occupy residues 29-49 (SLAF…IALF), 92-112 (GLTL…LMTI), 132-152 (LMVH…SVLA), 174-194 (FARL…YYAV), 207-227 (GGIA…LFIV), and 239-259 (FAVL…ILLG).

It belongs to the UPF0761 family.

The protein localises to the cell inner membrane. The sequence is that of UPF0761 membrane protein AZOSEA40600 from Aromatoleum aromaticum (strain DSM 19018 / LMG 30748 / EbN1) (Azoarcus sp. (strain EbN1)).